Here is a 145-residue protein sequence, read N- to C-terminus: Bacilliredoxin BLi02578/BL01507 (145 aa).

The protein belongs to the bacilliredoxin family.

This is Bacilliredoxin BLi02578/BL01507 from Bacillus licheniformis (strain ATCC 14580 / DSM 13 / JCM 2505 / CCUG 7422 / NBRC 12200 / NCIMB 9375 / NCTC 10341 / NRRL NRS-1264 / Gibson 46).